We begin with the raw amino-acid sequence, 74 residues long: MTLDLLEQLESKIQNTVDTIALLQMEVEELKEDKQVLTEKGEQLQAENIRLTEEHQKWQSRLSALVGKIEETES.

Residues 2-74 are a coiled coil; the sequence is TLDLLEQLES…LVGKIEETES (73 aa).

This sequence belongs to the ZapB family. In terms of assembly, homodimer. The ends of the coiled-coil dimer bind to each other, forming polymers. Interacts with FtsZ.

Its subcellular location is the cytoplasm. Functionally, non-essential, abundant cell division factor that is required for proper Z-ring formation. It is recruited early to the divisome by direct interaction with FtsZ, stimulating Z-ring assembly and thereby promoting cell division earlier in the cell cycle. Its recruitment to the Z-ring requires functional FtsA or ZipA. This chain is Cell division protein ZapB, found in Psychromonas ingrahamii (strain DSM 17664 / CCUG 51855 / 37).